The sequence spans 303 residues: Signal recognition particle receptor FtsY (303 aa).

GTP-binding positions include 108-115, 190-194, and 254-257; these read GVNGAGKT, DTAGR, and TKLD.

This sequence belongs to the GTP-binding SRP family. FtsY subfamily. As to quaternary structure, part of the signal recognition particle protein translocation system, which is composed of SRP and FtsY. SRP is a ribonucleoprotein composed of Ffh and a 4.5S RNA molecule.

The protein localises to the cell inner membrane. It is found in the cytoplasm. The catalysed reaction is GTP + H2O = GDP + phosphate + H(+). Involved in targeting and insertion of nascent membrane proteins into the cytoplasmic membrane. Acts as a receptor for the complex formed by the signal recognition particle (SRP) and the ribosome-nascent chain (RNC). Interaction with SRP-RNC leads to the transfer of the RNC complex to the Sec translocase for insertion into the membrane, the hydrolysis of GTP by both Ffh and FtsY, and the dissociation of the SRP-FtsY complex into the individual components. In Rickettsia felis (strain ATCC VR-1525 / URRWXCal2) (Rickettsia azadi), this protein is Signal recognition particle receptor FtsY.